A 49-amino-acid polypeptide reads, in one-letter code: Venom peptide 3 (49 aa).

The N-terminal stretch at 1–23 (MRFTFVLVIAATVAVLGFFGINA) is a signal peptide. AXPX repeat units lie at residues 23-26 (AEPM) and 31-34 (AEPY). The propeptide occupies 24–37 (EPMPDPHAEPYPDA). Leucine 48 carries the leucine amide modification.

In terms of tissue distribution, expressed by the venom gland.

The protein resides in the secreted. The protein is Venom peptide 3 of Eumenes pomiformis (Potter wasp).